The sequence spans 243 residues: Pyridoxine 5'-phosphate synthase (243 aa).

3-amino-2-oxopropyl phosphate is bound at residue asparagine 9. Position 11–12 (11–12 (DH)) interacts with 1-deoxy-D-xylulose 5-phosphate. A 3-amino-2-oxopropyl phosphate-binding site is contributed by arginine 20. Histidine 45 acts as the Proton acceptor in catalysis. 1-deoxy-D-xylulose 5-phosphate-binding residues include arginine 47 and histidine 52. Catalysis depends on glutamate 72, which acts as the Proton acceptor. Threonine 102 is a binding site for 1-deoxy-D-xylulose 5-phosphate. The active-site Proton donor is histidine 193. 3-amino-2-oxopropyl phosphate-binding positions include glycine 194 and 215–216 (GH).

This sequence belongs to the PNP synthase family. As to quaternary structure, homooctamer; tetramer of dimers.

Its subcellular location is the cytoplasm. It catalyses the reaction 3-amino-2-oxopropyl phosphate + 1-deoxy-D-xylulose 5-phosphate = pyridoxine 5'-phosphate + phosphate + 2 H2O + H(+). Its pathway is cofactor biosynthesis; pyridoxine 5'-phosphate biosynthesis; pyridoxine 5'-phosphate from D-erythrose 4-phosphate: step 5/5. Catalyzes the complicated ring closure reaction between the two acyclic compounds 1-deoxy-D-xylulose-5-phosphate (DXP) and 3-amino-2-oxopropyl phosphate (1-amino-acetone-3-phosphate or AAP) to form pyridoxine 5'-phosphate (PNP) and inorganic phosphate. The sequence is that of Pyridoxine 5'-phosphate synthase from Vibrio vulnificus (strain CMCP6).